Consider the following 102-residue polypeptide: Small ribosomal subunit protein uS10 (102 aa).

It belongs to the universal ribosomal protein uS10 family. As to quaternary structure, part of the 30S ribosomal subunit.

Involved in the binding of tRNA to the ribosomes. In Methanoculleus marisnigri (strain ATCC 35101 / DSM 1498 / JR1), this protein is Small ribosomal subunit protein uS10.